A 126-amino-acid chain; its full sequence is Large ribosomal subunit protein uL22 (126 aa).

Belongs to the universal ribosomal protein uL22 family. In terms of assembly, part of the 50S ribosomal subunit.

Functionally, this protein binds specifically to 23S rRNA; its binding is stimulated by other ribosomal proteins, e.g. L4, L17, and L20. It is important during the early stages of 50S assembly. It makes multiple contacts with different domains of the 23S rRNA in the assembled 50S subunit and ribosome. The globular domain of the protein is located near the polypeptide exit tunnel on the outside of the subunit, while an extended beta-hairpin is found that lines the wall of the exit tunnel in the center of the 70S ribosome. The polypeptide is Large ribosomal subunit protein uL22 (Jannaschia sp. (strain CCS1)).